A 441-amino-acid chain; its full sequence is Glutamate--tRNA ligase 1 (441 aa).

Residues 7–17 (PSPTGYMHIGN) carry the 'HIGH' region motif. The 'KMSKS' region motif lies at 236 to 240 (KMSKR). K239 contributes to the ATP binding site.

The protein belongs to the class-I aminoacyl-tRNA synthetase family. Glutamate--tRNA ligase type 1 subfamily. As to quaternary structure, monomer.

It is found in the cytoplasm. It catalyses the reaction tRNA(Glu) + L-glutamate + ATP = L-glutamyl-tRNA(Glu) + AMP + diphosphate. In terms of biological role, catalyzes the attachment of glutamate to tRNA(Glu) in a two-step reaction: glutamate is first activated by ATP to form Glu-AMP and then transferred to the acceptor end of tRNA(Glu). This Anaplasma marginale (strain St. Maries) protein is Glutamate--tRNA ligase 1.